The sequence spans 366 residues: Neutral protease 2 homolog BDBG_02110 (366 aa).

Residues 1–19 (MQLSSVLLTAAGLLAPVYS) form the signal peptide. The propeptide occupies 23–184 (ISIGRRSEGL…RAKIHDHLAQ (162 aa)). N-linked (GlcNAc...) asparagine glycans are attached at residues Asn123 and Asn192. Residues Cys272 and Cys290 are joined by a disulfide bond. His314 provides a ligand contact to Zn(2+). Residue Glu315 is part of the active site. A Zn(2+)-binding site is contributed by His318.

This sequence belongs to the peptidase M35 family. Zn(2+) serves as cofactor.

Its subcellular location is the secreted. It carries out the reaction Preferential cleavage of bonds with hydrophobic residues in P1'. Also 3-Asn-|-Gln-4 and 8-Gly-|-Ser-9 bonds in insulin B chain.. In terms of biological role, secreted metalloproteinase that allows assimilation of proteinaceous substrates. Shows high activities on basic nuclear substrates such as histone and protamine. This chain is Neutral protease 2 homolog BDBG_02110, found in Blastomyces gilchristii (strain SLH14081) (Blastomyces dermatitidis).